The following is a 275-amino-acid chain: MDWVYAIVYGIVEGITEFLPISSTGHLILTGNLMGVPWSKEVKDAFEVVIQGGAILSVLVYYWRDFLKIRHLGHDRSQQTLWTGVLVATIPAVVLGLAFGDQIQAVLFKPSVVAWALIVGGVLMWLIESRRVQPQVHAIETIGVRRSLLIGVLQCLALVWPGFSRSASSILGGMALGLDRPTATKFSFYLGVPTLGGAALLNLVKERELIFGEIGLLNVVLGAGVSFVVAYLAIGWLLKFVSTNNFKGFAVYRVAVGVLILVLIATGVMSNGSLA.

8 helical membrane passes run 1 to 21, 42 to 62, 80 to 100, 107 to 127, 147 to 167, 184 to 204, 214 to 234, and 249 to 269; these read MDWV…FLPI, VKDA…LVYY, TLWT…LAFG, LFKP…MWLI, SLLI…SRSA, TKFS…LNLV, IGLL…YLAI, and FAVY…TGVM.

The protein belongs to the UppP family.

It localises to the cell membrane. The enzyme catalyses di-trans,octa-cis-undecaprenyl diphosphate + H2O = di-trans,octa-cis-undecaprenyl phosphate + phosphate + H(+). In terms of biological role, catalyzes the dephosphorylation of undecaprenyl diphosphate (UPP). Confers resistance to bacitracin. The chain is Undecaprenyl-diphosphatase from Deinococcus deserti (strain DSM 17065 / CIP 109153 / LMG 22923 / VCD115).